We begin with the raw amino-acid sequence, 515 residues long: 2,3-bisphosphoglycerate-independent phosphoglycerate mutase (515 aa).

Mn(2+)-binding residues include aspartate 14 and serine 63. The active site involves serine 63. Substrate-binding positions include histidine 124, 154–155 (RD), arginine 186, arginine 192, 259–262 (RADR), and lysine 334. 5 residues coordinate Mn(2+): aspartate 401, histidine 405, aspartate 442, histidine 443, and histidine 460.

The protein belongs to the BPG-independent phosphoglycerate mutase family. Requires Mg(2+) as cofactor. Mn(2+) is required as a cofactor.

The enzyme catalyses (2R)-2-phosphoglycerate = (2R)-3-phosphoglycerate. The protein operates within carbohydrate degradation; glycolysis; pyruvate from D-glyceraldehyde 3-phosphate: step 3/5. With respect to regulation, activity is not affected by 2,3-bisphosphoglycerate. Catalyzes the interconversion of 2-phosphoglycerate and 3-phosphoglycerate. The protein is 2,3-bisphosphoglycerate-independent phosphoglycerate mutase of Brugia malayi (Filarial nematode worm).